Here is a 128-residue protein sequence, read N- to C-terminus: Cholecystokinin B (128 aa).

The first 20 residues, 1-20, serve as a signal peptide directing secretion; it reads MCSGVCICLLLAMLSASSKA. A propeptide spanning residues 21-108 is cleaved from the precursor; the sequence is HQATGSLGED…FDQSHRINDR (88 aa). The segment at 47–67 is disordered; it reads YARASSAGQKKSFQRTDGDQR. Y110 carries the post-translational modification Sulfotyrosine. A Phenylalanine amide modification is found at F116. Residues 120 to 128 constitute a propeptide that is removed on maturation; the sequence is SAEEYEYSS.

This sequence belongs to the gastrin/cholecystokinin family. Post-translationally, the precursor is cleaved by proteases to produce a number of active cholecystokinins. In terms of tissue distribution, brain and gastrointestinal tract.

It localises to the secreted. This is Cholecystokinin B (cck-b) from Xenopus laevis (African clawed frog).